We begin with the raw amino-acid sequence, 332 residues long: Potassium channel subfamily K member 17 (332 aa).

Residues 1–20 (MYRPRARAAPEGRVRGCAVP) are Cytoplasmic-facing. The chain crosses the membrane as a helical span at residues 21–43 (STVLLLLAYLAYLALGTGVFWTL). N-linked (GlcNAc...) asparagine glycosylation is found at Asn65 and Asn94. The segment at residues 106–124 (SFFFSVSTITTIGYGNLSP) is an intramembrane region (pore-forming). Residues Thr116, Ile117, Gly118, and Tyr119 each coordinate K(+). The interval 116 to 121 (TIGYGN) is selectivity filter 1. Residues 128–148 (AARLFCIFFALVGIPLNLVVL) form a helical membrane-spanning segment. The Cytoplasmic portion of the chain corresponds to 149 to 179 (NRLGHLMQQGVNHWASRLGGTWQDPDKARWL). Residues 180–200 (AGSGALLSGLLLFLLLPPLLF) traverse the membrane as a helical segment. The pore-forming intramembrane region spans 211–230 (GFYFAFITLSTVGFGDYVIG). Residues Thr221, Val222, Gly223, and Phe224 each coordinate K(+). Residues 221–226 (TVGFGD) form a selectivity filter 2 region. The helical transmembrane segment at 244–264 (MVSLWILFGMAWLALIIKLIL) threads the bilayer. Residues 265–332 (SQLETPGRVC…AHAAGCGKDS (68 aa)) lie on the Cytoplasmic side of the membrane. The interval 287–312 (SQSWRQGPDREPESHSPQQGCYPEGP) is disordered.

The protein belongs to the two pore domain potassium channel (TC 1.A.1.8) family. As to quaternary structure, homodimer; disulfide-linked. Heterodimer with KCNK5 and KCNK16. As to expression, widely expressed. Highly expressed in aorta and coronary artery. Expressed in pancreas, in both endocrine (alpha, beta, gamma, delta, and epsilon) and exocrine (acinar and ductal) cells.

It is found in the cell membrane. The catalysed reaction is K(+)(in) = K(+)(out). The enzyme catalyses Rb(+)(in) = Rb(+)(out). It carries out the reaction Cs(+)(in) = Cs(+)(out). Its activity is regulated as follows. Inhibited by Ba(2+), quinidine, chloroform and halothane. Activated at alkaline pH. Activated by quinine and isoflurane. In terms of biological role, k(+) channel that conducts voltage-dependent outward rectifying currents upon membrane depolarization. Voltage sensing is coupled to K(+) electrochemical gradient in an 'ion flux gating' mode where outward but not inward ion flow opens the gate. Homo- and heterodimerizes to form functional channels with distinct regulatory and gating properties. Present in the cardiac conduction system where it may regulate action potential duration and beating frequency of cardiac myocytes. Permeable to other monovalent cations such as Rb(+) and Cs(+). This is Potassium channel subfamily K member 17 from Homo sapiens (Human).